A 174-amino-acid polypeptide reads, in one-letter code: Peptide methionine sulfoxide reductase MsrA (174 aa).

Residue cysteine 10 is part of the active site.

This sequence belongs to the MsrA Met sulfoxide reductase family.

It carries out the reaction L-methionyl-[protein] + [thioredoxin]-disulfide + H2O = L-methionyl-(S)-S-oxide-[protein] + [thioredoxin]-dithiol. The catalysed reaction is [thioredoxin]-disulfide + L-methionine + H2O = L-methionine (S)-S-oxide + [thioredoxin]-dithiol. Functionally, has an important function as a repair enzyme for proteins that have been inactivated by oxidation. Catalyzes the reversible oxidation-reduction of methionine sulfoxide in proteins to methionine. This is Peptide methionine sulfoxide reductase MsrA from Acinetobacter baumannii (strain SDF).